The following is a 440-amino-acid chain: MKLWGGRFKEEESKLMEDFNSSLSFDKKLYYEDIKGSIAHVKMLVNQNIIKEEEKEKILLGLEEILKEIDEGILKIEGDYEDIHSFVEINLINKIGNVGKKLHTGRSRNDQVALDMKLYAKKSTEEVIKCLKELMDSLIKVGNENNYIMPGYTHLQRAQVVTFRYHLLAYFEMFKRDEKRLKNALEILNESPLGSGALAGSTYSIDREYTAKLLGFRKPVDNFLDGVSDRDYIIELISKFSIIMMHLSRLSEELILWSSSEFRFIQIGDAYSTGSSIMPQKKNPDGAELIRGKTGRVYGDLIGILTVMKSLPLAYNKDMQEDKEPFFDAKDTVISCLKVMEGIISTLKVNKENLMKSVKKGFLNATEAADYLVNKGMAFRDAHKVIGEIVIYCEDKNSAIEDLSLEELKQFSDLFCEDIYGFIDYKSSINKGIKKEMGYF.

The protein belongs to the lyase 1 family. Argininosuccinate lyase subfamily.

The protein localises to the cytoplasm. The catalysed reaction is 2-(N(omega)-L-arginino)succinate = fumarate + L-arginine. It functions in the pathway amino-acid biosynthesis; L-arginine biosynthesis; L-arginine from L-ornithine and carbamoyl phosphate: step 3/3. The polypeptide is Argininosuccinate lyase (Clostridium botulinum (strain Langeland / NCTC 10281 / Type F)).